A 649-amino-acid chain; its full sequence is Lipoteichoic acid synthase 2 (649 aa).

Topologically, residues 1 to 9 (MKTFIKERG) are cytoplasmic. The chain crosses the membrane as a helical span at residues 10 to 30 (LAFFLIAVVLLWIKTYVGYVL). The Extracellular segment spans residues 31-42 (NFNLGIDNTIQK). A helical transmembrane segment spans residues 43–63 (ILLFVNPLSSSLFFLGFGLLF). At 64–69 (KKKLQQ) the chain is on the cytoplasmic side. The helical transmembrane segment at 70–90 (TAIIVIHFLMSFLLYANIVYY) threads the bilayer. Topologically, residues 91-118 (RFFNDFITIPVIMQAKTNGGQLGDSAFS) are extracellular. The helical transmembrane segment at 119–139 (LMRPTDAFYFIDTIILIILAI) threads the bilayer. Residues 140–151 (KVNKPAETSSKK) lie on the Cytoplasmic side of the membrane. A helical transmembrane segment spans residues 152 to 172 (SFRIIFASSILVFLINLAVAE). At 173-649 (SDRPELLTRS…SETSKDNEDK (477 aa)) the chain is on the extracellular side. Mn(2+) is bound by residues Glu-253 and Thr-297. The active site involves Thr-297. Residue His-412 coordinates substrate. Mn(2+)-binding residues include Asp-471 and His-472. The disordered stretch occupies residues 622-649 (FKKVNPSDYDYTKHDEDSSETSKDNEDK). Positions 631-649 (DYTKHDEDSSETSKDNEDK) are enriched in basic and acidic residues.

The protein belongs to the LTA synthase family. Post-translationally, proteolytically cleaved.

It localises to the cell membrane. The protein localises to the secreted. It participates in cell wall biogenesis; lipoteichoic acid biosynthesis. Functionally, catalyzes the polymerization of lipoteichoic acid (LTA) polyglycerol phosphate, a reaction that presumably uses phosphatidylglycerol (PG) as substrate. The sequence is that of Lipoteichoic acid synthase 2 (ltaS2) from Bacillus subtilis (strain 168).